A 130-amino-acid chain; its full sequence is Large ribosomal subunit protein bL17 (130 aa).

Belongs to the bacterial ribosomal protein bL17 family. In terms of assembly, part of the 50S ribosomal subunit. Contacts protein L32.

The protein is Large ribosomal subunit protein bL17 of Shewanella loihica (strain ATCC BAA-1088 / PV-4).